The chain runs to 101 residues: Diptericin-D (101 aa).

Residues 1-18 form the signal peptide; that stretch reads MKLFYLLVICALSLAVMA. Residues Thr28 and Thr72 are each glycosylated (O-linked (GalNAc...) threonine). The residue at position 100 (Phe100) is a Phenylalanine amide.

This sequence belongs to the attacin/sarcotoxin-2 family.

In terms of biological role, has activity against E.coli. In Protophormia terraenovae (Northern blowfly), this protein is Diptericin-D.